We begin with the raw amino-acid sequence, 326 residues long: Peroxidase 41 (326 aa).

Positions 1-20 are cleaved as a signal peptide; that stretch reads MSSVINVLFVVLVFVPSIYS. Asparagine 25 carries an N-linked (GlcNAc...) asparagine glycan. 4 cysteine pairs are disulfide-bonded: cysteine 35–cysteine 116, cysteine 68–cysteine 73, cysteine 122–cysteine 318, and cysteine 201–cysteine 228. Histidine 66 functions as the Proton acceptor in the catalytic mechanism. Positions 67, 72, 74, and 76 each coordinate Ca(2+). Position 164 (proline 164) interacts with substrate. N-linked (GlcNAc...) asparagine glycosylation occurs at asparagine 167. Residue histidine 194 participates in heme b binding. Residue threonine 195 coordinates Ca(2+). A glycan (N-linked (GlcNAc...) asparagine) is linked at asparagine 234. Aspartate 242, threonine 245, and aspartate 250 together coordinate Ca(2+). Residue asparagine 286 is glycosylated (N-linked (GlcNAc...) asparagine).

Belongs to the peroxidase family. Classical plant (class III) peroxidase subfamily. Heme b serves as cofactor. Requires Ca(2+) as cofactor.

The protein resides in the secreted. It carries out the reaction 2 a phenolic donor + H2O2 = 2 a phenolic radical donor + 2 H2O. Removal of H(2)O(2), oxidation of toxic reductants, biosynthesis and degradation of lignin, suberization, auxin catabolism, response to environmental stresses such as wounding, pathogen attack and oxidative stress. These functions might be dependent on each isozyme/isoform in each plant tissue. The chain is Peroxidase 41 (PER41) from Arabidopsis thaliana (Mouse-ear cress).